We begin with the raw amino-acid sequence, 323 residues long: Aspartate carbamoyltransferase catalytic subunit (323 aa).

Residues R61 and T62 each contribute to the carbamoyl phosphate site. K89 is an L-aspartate binding site. Carbamoyl phosphate-binding residues include R111, H144, and Q147. Positions 184 and 238 each coordinate L-aspartate. Carbamoyl phosphate-binding residues include G279 and P280.

The protein belongs to the aspartate/ornithine carbamoyltransferase superfamily. ATCase family. Heterododecamer (2C3:3R2) of six catalytic PyrB chains organized as two trimers (C3), and six regulatory PyrI chains organized as three dimers (R2).

The catalysed reaction is carbamoyl phosphate + L-aspartate = N-carbamoyl-L-aspartate + phosphate + H(+). It functions in the pathway pyrimidine metabolism; UMP biosynthesis via de novo pathway; (S)-dihydroorotate from bicarbonate: step 2/3. Its function is as follows. Catalyzes the condensation of carbamoyl phosphate and aspartate to form carbamoyl aspartate and inorganic phosphate, the committed step in the de novo pyrimidine nucleotide biosynthesis pathway. The protein is Aspartate carbamoyltransferase catalytic subunit of Acaryochloris marina (strain MBIC 11017).